Here is a 403-residue protein sequence, read N- to C-terminus: F-box only protein 22 (403 aa).

At methionine 1 the chain carries N-acetylmethionine. Residues 21–67 (FVLSNLAEVVERVLTFLPAKALLRVACVCRLWRECVRRVLRTHRSVT) enclose the F-box domain. Phosphothreonine is present on threonine 127. Serine 128 is subject to Phosphoserine. Position 194 is an N6-acetyllysine (lysine 194).

In terms of assembly, directly interacts with SKP1 and CUL1. Interacts (via C-terminal) with KDM4A. Interacts with TP53. Interacts with MTOR; this interaction promotes 'lys-27'-linked ubiquitination of MTOR. (Microbial infection) Interacts with SARS_COV-2 protein NSP5; this interaction attenuates NSP5-mediated inhibition of innate immunity. Phosphorylated by EIF2AK4 at Thr-127 causes cytoplasmic retention of FBXO22. In terms of tissue distribution, predominantly expressed in liver, also enriched in cardiac muscle.

It is found in the cytoplasm. It localises to the nucleus. Its subcellular location is the myofibril. The protein localises to the sarcomere. The protein resides in the z line. Its function is as follows. Substrate-recognition component of the SCF (SKP1-CUL1-F-box protein)-type E3 ubiquitin ligase complex that is implicated in the control of various cellular processes such as cell cycle control, transcriptional regulation, DNA damage repair, and apoptosis. Promotes the proteasome-dependent degradation of key sarcomeric proteins, such as alpha-actinin (ACTN2) and filamin-C (FLNC), essential for maintenance of normal contractile function. Acts as a key regulator of histone methylation marks namely H3K9 and H3K36 methylation through the regulation of histone demethylase KDM4A protein levels. In complex with KDM4A, also regulates the abundance of TP53 by targeting methylated TP53 for degradation at the late senescent stage. Under oxidative stress, promotes the ubiquitination and degradation of BACH1. Mechanistically, reactive oxygen species (ROS) covalently modify cysteine residues on the bZIP domain of BACH1, leading to its release from chromatin and making it accessible to FBXO22. Upon amino acid depletion, mediates 'Lys-27'-linked ubiquitination of MTOR and thereby inhibits substrate recruitment to mTORC1. Also inhibits SARS-CoV-2 replication by inducing NSP5 degradation. The polypeptide is F-box only protein 22 (FBXO22) (Homo sapiens (Human)).